The following is a 125-amino-acid chain: Crustacean hyperglycemic hormones 5 (125 aa).

An N-terminal signal peptide occupies residues 1–34; that stretch reads MKPGNTSFNMVSFRMVWTAMMATLLVAGASSAGT. 3 cysteine pairs are disulfide-bonded: C58/C94, C74/C90, and C77/C103. Position 123 is a valine amide (V123).

This sequence belongs to the arthropod CHH/MIH/GIH/VIH hormone family. Produced by the medulla terminalis X-organ in the eyestalks and transported to the sinus gland where they are stored and released.

The protein resides in the secreted. In terms of biological role, hormone found in the sinus gland of isopods and decapods which controls the blood sugar level. Has a secretagogue action over the amylase released from the midgut gland. May act as a stress hormone and may be involved in the control of molting and reproduction. The polypeptide is Crustacean hyperglycemic hormones 5 (Penaeus japonicus (Kuruma prawn)).